The chain runs to 605 residues: Replication and transcription activator (605 aa).

2 disordered regions span residues 307–380 (SLPS…AEPE) and 447–499 (RIRP…AVTP). Residues 321–338 (SADCGDSSSSSSDSGNSD) are compositionally biased toward low complexity. A compositionally biased stretch (basic and acidic residues) spans 341 to 353 (QSEREEARAEAPR). A compositionally biased stretch (basic residues) spans 355-364 (RAPKSRRTSR).

This sequence belongs to the herpesviridae Rta family. In terms of assembly, interacts with human ATF7IP protein, leading to promote and regulate host genes in virus-infected cells. Interacts with RNA polymerase III complex; this interaction downregulates small RNA transcription and 5'-pppRNA production.

The protein resides in the host nucleus. Its subcellular location is the virion tegument. Its function is as follows. Immediate-early transcription factor that controls the initiation of viral lytic gene expression and lytic reactivation from latency. Triggers lytic replication, and initiates a cellular senescence program in epithelial cells. Up-regulates human DCR3/TNFRSF6B by directly binding to its receptor. Globally induces a proteasome-dependent loss of SUMOylated proteins in the host cell and the loss of promeylocytic leukemia nuclear bodies. Improves the stability of the triplex capsid protein TRX1 by reducing the ubiquitination level of the latter. Mediates evasion of inflammasome activation and antiviral responses (T- and NK cell activation) during EBV early lytic infection. In Epstein-Barr virus (strain B95-8) (HHV-4), this protein is Replication and transcription activator.